We begin with the raw amino-acid sequence, 465 residues long: Solute carrier family 7 member 12 (465 aa).

Over 1 to 6 the chain is Cytoplasmic; it reads MQLLRA. A helical membrane pass occupies residues 7-27; that stretch reads LGVFHVSMILFSATLGTGIFV. Residues 28 to 39 lie on the Extracellular side of the membrane; it reads TPKAVLKYSSLN. Residues 40–60 form a helical membrane-spanning segment; sequence IPVSLSIWAGCGLLSIMSALC. Over 61–81 the chain is Cytoplasmic; sequence NAEIATTYPLSGASYYFLKRT. The helical transmembrane segment at 82–102 threads the bilayer; that stretch reads LGSSVAFLSLWIKLFAHFLGI. The Extracellular portion of the chain corresponds to 103–132; sequence GAQCLLIATSVIQCFYSGCPAPELPTKCLA. A helical transmembrane segment spans residues 133-153; the sequence is LAILWSFGIVSARGIKTVAWF. A topological domain (cytoplasmic) is located at residue asparagine 154. The helical transmembrane segment at 155-175 threads the bilayer; it reads TVSSFIKLSVLCLISLTVLLV. Residues 176–202 lie on the Extracellular side of the membrane; it reads NGKKENVSRFENALDAELPNASQIADA. Residues 203–223 traverse the membrane as a helical segment; it reads ILQVSYSYLGSSVLIVIAGEI. Over 224 to 234 the chain is Cytoplasmic; sequence KRPTETIPKTL. A helical membrane pass occupies residues 235–255; that stretch reads IYGISIVTVLYLLTNISYLAV. At 256–280 the chain is on the extracellular side; that stretch reads LTSQEIIFSDSVGVTWMNRVFPSIQ. A helical transmembrane segment spans residues 281 to 301; sequence WISSFLISAFLLGSVSCGIVS. The Cytoplasmic segment spans residues 302-327; sequence ASRVFYSASQEGEFPSIYSMLNDHHS. The chain crosses the membrane as a helical span at residues 328–351; that stretch reads PAVADIQIVILSSVAIISSSIIYL. Residues 352–356 lie on the Extracellular side of the membrane; it reads VKYVS. Residues 357–375 form a helical membrane-spanning segment; sequence LGSFCINLLQMIGLLKIRY. Residues 376-386 lie on the Cytoplasmic side of the membrane; that stretch reads QNPDIPRPYKV. A helical membrane pass occupies residues 387-407; it reads WLPFIFGSIALSLFLIFTPVI. Residues 408–409 lie on the Extracellular side of the membrane; the sequence is QS. Residues 410–430 form a helical membrane-spanning segment; the sequence is PSIEHVYQVVFLFCGFLCYWL. Topologically, residues 431 to 465 are cytoplasmic; it reads QANLNGHATCFDTITCYCQLLFNISPSEDPEEQKN.

Belongs to the amino acid-polyamine-organocation (APC) superfamily. Probably forms multimers, perhaps with an unknown protein(s). As to expression, expressed in kidney and red blood cells (at protein level). Expressed in kidney along the collecting ducts in the cortex, outer and inner medulla. May be expressed in placenta, lungs, spleen and skeletal muscles.

It localises to the apical cell membrane. Its subcellular location is the basal cell membrane. The protein localises to the cytoplasm. Its function is as follows. Probably mediates sodium- and chloride-independent uptake of neutral amino acids. This Mus musculus (Mouse) protein is Solute carrier family 7 member 12.